The chain runs to 374 residues: MPLFATPFAQLDLVRQPEQDGEPLQAFDAADEYLLNQLHERGVTAQCRVLVLNDAFGALAASLAPHVQVTSSGDSHLGFLALRKNLARNGLDLGSVRFVPASETAVGPFDHVLVKVPKTLALLEEQLIRLHGQLAPGAQVVAAGMVKHLPRAAGDLLERYIGPMHASLAVKKARLLIAEAAERPQPRSPYPTRYRLEQPPLTLLNHANVFCREGLDIGTRAFLPHLPRSLGALRAADLGCGNGVLGIAYALLNPQAELTLVDESYMAVQSARENWRAALGERPATFRADDGLAGQAAGSLDLVLCNPPFHQQQVVGDFLAWRMFLQARDALAAGGELWIVGNRHLGYHAKLKRLFRGVEQVAANPKFVILKAGK.

Belongs to the methyltransferase superfamily. RlmG family.

The protein resides in the cytoplasm. The catalysed reaction is guanosine(1835) in 23S rRNA + S-adenosyl-L-methionine = N(2)-methylguanosine(1835) in 23S rRNA + S-adenosyl-L-homocysteine + H(+). Functionally, specifically methylates the guanine in position 1835 (m2G1835) of 23S rRNA. The protein is Ribosomal RNA large subunit methyltransferase G of Pseudomonas aeruginosa (strain UCBPP-PA14).